A 678-amino-acid chain; its full sequence is Macrolide export ATP-binding/permease protein MacB 1 (678 aa).

The ABC transporter domain maps to 11–249; that stretch reads LRLENVSREF…PKMVDIPSVI (239 aa). Residue 47 to 54 coordinates ATP; it reads GTSGSGKS. 4 helical membrane passes run 303 to 323, 558 to 578, 608 to 628, and 641 to 661; these read ALTM…VALG, IAVI…LVSV, LVCL…GLLF, and AASI…FGFF.

This sequence belongs to the ABC transporter superfamily. Macrolide exporter (TC 3.A.1.122) family. As to quaternary structure, homodimer. Part of the tripartite efflux system MacAB-TolC, which is composed of an inner membrane transporter, MacB, a periplasmic membrane fusion protein, MacA, and an outer membrane component, TolC. The complex forms a large protein conduit and can translocate molecules across both the inner and outer membranes. Interacts with MacA.

Its subcellular location is the cell inner membrane. Its function is as follows. Part of the tripartite efflux system MacAB-TolC. MacB is a non-canonical ABC transporter that contains transmembrane domains (TMD), which form a pore in the inner membrane, and an ATP-binding domain (NBD), which is responsible for energy generation. Confers resistance against macrolides. The sequence is that of Macrolide export ATP-binding/permease protein MacB 1 from Yersinia pestis bv. Antiqua (strain Nepal516).